Reading from the N-terminus, the 561-residue chain is Carbohydrate sulfotransferase 15 (561 aa).

Over 1 to 80 (MRHCINCCIQ…FLRFRKGKRC (80 aa)) the chain is Cytoplasmic. Residues 81 to 101 (SLVFGLIIMTLVMASYILSGA) traverse the membrane as a helical; Signal-anchor for type II membrane protein segment. Topologically, residues 102-561 (HQELLISSPF…DDEAFAWKTT (460 aa)) are lumenal. 263 to 267 (KCGTT) lines the 3'-phosphoadenylyl sulfate pocket. Asn-364 carries N-linked (GlcNAc...) asparagine glycosylation. 2 residues coordinate 3'-phosphoadenylyl sulfate: Arg-392 and Ser-400.

This sequence belongs to the sulfotransferase 1 family. In terms of assembly, homodimer; disulfide-linked (Potential). The relevance of homodimerization is however unsure. May interact with phosphorylated proteins in resting B-cells, including HCK. A divalent metal cation serves as cofactor. The cofactor is glutathione. Glycosylated.

It is found in the golgi apparatus membrane. It carries out the reaction dermatan 4'-sulfate + n 3'-phosphoadenylyl sulfate = dermatan 4',6'-bissulfate + n adenosine 3',5'-bisphosphate + n H(+). The enzyme catalyses chondroitin 4'-sulfate + n 3'-phosphoadenylyl sulfate = chondroitin 4',6'-bissulfate + n adenosine 3',5'-bisphosphate + n H(+). Inhibited by phenyl beta-GalNAc(4,6-SO(4)). Functionally, sulfotransferase that transfers sulfate from 3'-phosphoadenosine 5'-phosphosulfate (PAPS) to the C-6 hydroxyl group of the GalNAc 4-sulfate residue of chondroitin sulfate A and forms chondroitin sulfate E containing GlcA-GalNAc(4,6-SO(4)) repeating units. It also transfers sulfate to a unique non-reducing terminal sequence, GalNAc(4SO4)-GlcA(2SO4)-GalNAc(6SO4), to yield a highly sulfated structure similar to the structure found in thrombomodulin chondroitin sulfate. May also act as a B-cell receptor involved in BCR ligation-mediated early activation that mediate regulatory signals key to B-cell development and/or regulation of B-cell-specific RAG expression; however such results are unclear in vivo. The sequence is that of Carbohydrate sulfotransferase 15 (Chst15) from Rattus norvegicus (Rat).